A 344-amino-acid polypeptide reads, in one-letter code: 2,3,4,5-tetrahydropyridine-2,6-dicarboxylate N-succinyltransferase (344 aa).

Glu-205 provides a ligand contact to Mg(2+). Glu-221 (acyl-anhydride intermediate) is an active-site residue. Succinyl-CoA-binding positions include Arg-223, Gly-238, Ser-241, Ala-264, 279-280, 287-289, Lys-304, and 317-320; these read EA, GTK, and RRNS.

This sequence belongs to the type 2 tetrahydrodipicolinate N-succinyltransferase family. Homotrimer. Requires Magnesium ions are not essential for catalysis. as cofactor.

It is found in the cytoplasm. The catalysed reaction is (S)-2,3,4,5-tetrahydrodipicolinate + succinyl-CoA + H2O = (S)-2-succinylamino-6-oxoheptanedioate + CoA. It functions in the pathway amino-acid biosynthesis; L-lysine biosynthesis via DAP pathway; LL-2,6-diaminopimelate from (S)-tetrahydrodipicolinate (succinylase route): step 1/3. Its activity is regulated as follows. Weakly inhibited by D-2-aminopimelate. Functionally, catalyzes the conversion of the cyclic tetrahydrodipicolinate (THDP) into the acyclic N-succinyl-L-2-amino-6-oxopimelate using succinyl-CoA. Displays succinyl transferase activity with L-2-aminopimelate and succinyl-CoA as substrates. This chain is 2,3,4,5-tetrahydropyridine-2,6-dicarboxylate N-succinyltransferase, found in Pseudomonas aeruginosa (strain ATCC 15692 / DSM 22644 / CIP 104116 / JCM 14847 / LMG 12228 / 1C / PRS 101 / PAO1).